The following is a 481-amino-acid chain: Sterol 14-alpha demethylase (481 aa).

Residues 1–21 form a helical membrane-spanning segment; that stretch reads MFIEAIVLALTALILYSVYSV. Cysteine 422 serves as a coordination point for heme.

This sequence belongs to the cytochrome P450 family. Heme serves as cofactor.

Its subcellular location is the membrane. It carries out the reaction a 14alpha-methyl steroid + 3 reduced [NADPH--hemoprotein reductase] + 3 O2 = a Delta(14) steroid + formate + 3 oxidized [NADPH--hemoprotein reductase] + 4 H2O + 4 H(+). It functions in the pathway steroid biosynthesis; zymosterol biosynthesis; zymosterol from lanosterol: step 1/6. Functionally, catalyzes C14-demethylation of lanosterol which is critical for ergosterol biosynthesis. It transforms lanosterol into 4,4'-dimethyl cholesta-8,14,24-triene-3-beta-ol. Favors C4 dimethylated substrates, the substrate preference order is 24-methylenedihydrolanosterol &gt; 24,25-dihydrolanosterol &gt; lanosterol &gt; obtusifoliol &gt; norlanosterol. The sequence is that of Sterol 14-alpha demethylase from Trypanosoma cruzi (strain CL Brener).